A 430-amino-acid chain; its full sequence is Crotonyl-CoA carboxylase/reductase (430 aa).

The protein belongs to the zinc-containing alcohol dehydrogenase family. Crotonyl-CoA carboxylase/reductase subfamily. In terms of assembly, homodimer. Requires Despite some sequence similarity to zinc-containing alcohol dehydrogenases, this enzyme does not bind any metals. as cofactor.

The enzyme catalyses (2S)-ethylmalonyl-CoA + NADP(+) = (2E)-butenoyl-CoA + CO2 + NADPH. It carries out the reaction (S)-methylmalonyl-CoA + NADP(+) = acryloyl-CoA + CO2 + NADPH. It catalyses the reaction butanoyl-CoA + NADP(+) = (2E)-butenoyl-CoA + NADPH + H(+). In terms of biological role, catalyzes the NADPH-dependent reductive carboxylation of crotonyl-CoA ((2E)-butenoyl-CoA) to (2S)-ethylmalonyl-CoA, in the presence of CO2. This is a key reaction in the ethylmalonyl-CoA pathway for acetyl-CoA assimilation required for R.sphaeroides growth on acetate as sole carbon source. Is also able to accept acryloyl-CoA as an alternative substrate, yielding (2S)-methylmalonyl-CoA. To a lesser extent, when CO2 is absent, the enzyme also catalyzes the reduction of crotonyl-CoA to butanoyl-CoA. This Cereibacter sphaeroides (strain ATCC 17023 / DSM 158 / JCM 6121 / CCUG 31486 / LMG 2827 / NBRC 12203 / NCIMB 8253 / ATH 2.4.1.) (Rhodobacter sphaeroides) protein is Crotonyl-CoA carboxylase/reductase.